A 344-amino-acid polypeptide reads, in one-letter code: Anthranilate phosphoribosyltransferase (344 aa).

Residues Gly-84, 87 to 88 (GD), Thr-92, 94 to 97 (NIST), 112 to 120 (KHGNRSVSS), and Ser-124 contribute to the 5-phospho-alpha-D-ribose 1-diphosphate site. Residue Gly-84 coordinates anthranilate. A Mg(2+)-binding site is contributed by Ser-96. Residue Asn-115 coordinates anthranilate. Arg-170 is an anthranilate binding site. Residues Asp-229 and Glu-230 each coordinate Mg(2+).

It belongs to the anthranilate phosphoribosyltransferase family. Homodimer. Mg(2+) is required as a cofactor.

It catalyses the reaction N-(5-phospho-beta-D-ribosyl)anthranilate + diphosphate = 5-phospho-alpha-D-ribose 1-diphosphate + anthranilate. It functions in the pathway amino-acid biosynthesis; L-tryptophan biosynthesis; L-tryptophan from chorismate: step 2/5. Its function is as follows. Catalyzes the transfer of the phosphoribosyl group of 5-phosphorylribose-1-pyrophosphate (PRPP) to anthranilate to yield N-(5'-phosphoribosyl)-anthranilate (PRA). This chain is Anthranilate phosphoribosyltransferase, found in Xylella fastidiosa (strain M23).